Consider the following 382-residue polypeptide: V-type proton ATPase subunit C 1 (382 aa).

Threonine 2 carries the post-translational modification N-acetylthreonine.

Belongs to the V-ATPase C subunit family. In terms of assembly, V-ATPase is a heteromultimeric enzyme made up of two complexes: the ATP-hydrolytic V1 complex and the proton translocation V0 complex. The V1 complex consists of three catalytic AB heterodimers that form a heterohexamer, three peripheral stalks each consisting of EG heterodimers, one central rotor including subunits D and F, and the regulatory subunits C and H. The proton translocation complex V0 consists of the proton transport subunit a, a ring of proteolipid subunits c9c'', rotary subunit d, subunits e and f, and the accessory subunits ATP6AP1/Ac45 and ATP6AP2/PRR. In terms of tissue distribution, ubiquitous. Abundant in brain, liver, kidney and testis.

The protein localises to the cytoplasmic vesicle. It is found in the secretory vesicle. It localises to the synaptic vesicle membrane. The protein resides in the clathrin-coated vesicle membrane. Its function is as follows. Subunit of the V1 complex of vacuolar(H+)-ATPase (V-ATPase), a multisubunit enzyme composed of a peripheral complex (V1) that hydrolyzes ATP and a membrane integral complex (V0) that translocates protons. V-ATPase is responsible for acidifying and maintaining the pH of intracellular compartments and in some cell types, is targeted to the plasma membrane, where it is responsible for acidifying the extracellular environment. Subunit C is necessary for the assembly of the catalytic sector of the enzyme and is likely to have a specific function in its catalytic activity. The protein is V-type proton ATPase subunit C 1 (Atp6v1c1) of Mus musculus (Mouse).